The primary structure comprises 1663 residues: TPR repeat-containing protein DDB_G0287407 (1663 aa).

Disordered regions lie at residues 84 to 109 (RKTQ…QKGQ) and 326 to 359 (SEYS…NSNQ). A compositionally biased stretch (low complexity) spans 89 to 105 (TSSNGSTSTTTTTTTTT). Acidic residues predominate over residues 333-352 (DDGENDQSDDDDDNEDDDDF). TPR repeat units lie at residues 1110–1143 (SDVW…YINN), 1150–1183 (AKVD…YTKE), 1192–1225 (AITL…CESK), 1234–1269 (ADIA…TESK), 1278–1311 (ARIL…YEAR), and 1320–1353 (SQIL…TKKI). Disordered stretches follow at residues 1500-1528 (VAQP…QQQR) and 1544-1571 (QKVS…RQNT). Residues 1516–1547 (RTQQAIQQGQQQRQQVQQQQQQVQQQMSQKVS) adopt a coiled-coil conformation. Composition is skewed to low complexity over residues 1518 to 1528 (QQAIQQGQQQR) and 1544 to 1563 (QKVS…QPSQ).

The chain is TPR repeat-containing protein DDB_G0287407 from Dictyostelium discoideum (Social amoeba).